The sequence spans 636 residues: Protein BCAP (636 aa).

Coiled coils occupy residues 36–97 (LSCL…EQKE), 141–220 (ESEN…WNLQ), 249–325 (YKQR…HGKN), 377–484 (ISSE…ECQE), and 519–631 (LEEE…KMNS).

The protein belongs to the ODF2 family. In terms of tissue distribution, mainly expressed in trachea and testis. Not detected in bone marrow, bladder, leukocytes. Only weakly detected in tongue, stomach, brain and ovaries.

The protein resides in the cytoplasm. It is found in the cytoskeleton. The protein localises to the microtubule organizing center. It localises to the centrosome. Its subcellular location is the centriole. The protein resides in the centriolar satellite. It is found in the cilium basal body. Its function is as follows. Acts as a suppressor of ciliogenesis, specifically, the initiation of ciliogenesis. This Homo sapiens (Human) protein is Protein BCAP.